The following is a 353-amino-acid chain: Histidinol-phosphate aminotransferase 1 (353 aa).

Lys-211 bears the N6-(pyridoxal phosphate)lysine mark.

It belongs to the class-II pyridoxal-phosphate-dependent aminotransferase family. Histidinol-phosphate aminotransferase subfamily. As to quaternary structure, homodimer. Pyridoxal 5'-phosphate serves as cofactor.

It catalyses the reaction L-histidinol phosphate + 2-oxoglutarate = 3-(imidazol-4-yl)-2-oxopropyl phosphate + L-glutamate. Its pathway is amino-acid biosynthesis; L-histidine biosynthesis; L-histidine from 5-phospho-alpha-D-ribose 1-diphosphate: step 7/9. The protein is Histidinol-phosphate aminotransferase 1 (hisC1) of Nostoc sp. (strain PCC 7120 / SAG 25.82 / UTEX 2576).